Reading from the N-terminus, the 535-residue chain is Sucrose transport protein SUT5 (535 aa).

At 1 to 53 the chain is on the cytoplasmic side; the sequence is MEEGRRGDREGKSAAGWTALSTTKTTLEEKRRLQANGSVGGDAGTSGFRRIVR. The helical transmembrane segment at 54–74 threads the bilayer; the sequence is LFFACMVAGGIQYGWALQLSL. At 75-87 the chain is on the extracellular side; sequence LSPYSQTLGISHS. A helical transmembrane segment spans residues 88–108; that stretch reads YVSLTWICGPIAGFVVQPIVG. Topologically, residues 109–122 are cytoplasmic; that stretch reads YYSDRCTMKMGRRR. Residues 123–143 form a helical membrane-spanning segment; sequence PFILVGCLIICISVMIIGFSA. At 144–163 the chain is on the extracellular side; the sequence is DIGRHLGDTKEHCSTYTGPR. Residues 164-184 traverse the membrane as a helical segment; the sequence is WSAAMVYIVGFWFLDFANNTV. The Cytoplasmic segment spans residues 185-203; it reads QGPARAMMADLSAGHHGPN. Residues 204–224 form a helical membrane-spanning segment; the sequence is VGQSIFSLWMAIGSVLGYLSG. Residues 225 to 249 lie on the Extracellular side of the membrane; that stretch reads ANGKWHEWFPWLKTAACCDACANLK. The chain crosses the membrane as a helical span at residues 250–270; it reads GAFFTAVLLIVVSMTVTMYLA. Residues 271 to 302 are Cytoplasmic-facing; sequence DEMPLDKQDVDTSGGGGCAVFVDLFKSLRNLP. Residues 303–323 form a helical membrane-spanning segment; sequence PAMFKVLAVTAVTWLSWFPFI. The Extracellular portion of the chain corresponds to 324 to 354; sequence QYNTDWMGREIYHGEPQGTAAKADVYDAGVR. A helical transmembrane segment spans residues 355–375; that stretch reads EGAMGLLFCSVALGVTSFVIP. Residues 376–384 are Cytoplasmic-facing; it reads KLCRRLTSK. The helical transmembrane segment at 385 to 405 threads the bilayer; sequence VVWSISNFLVFALMAVMVAVG. Over 406–429 the chain is Extracellular; sequence MVSMRGYRPSLAAGLTGPDPTLKA. The helical transmembrane segment at 430–450 threads the bilayer; the sequence is VALVVFALIGIPQAVLFSVPW. Residues 451 to 465 are Cytoplasmic-facing; it reads AVASEVTAEEGGGQG. Residues 466–486 traverse the membrane as a helical segment; that stretch reads LAIGVLNIAIVVPQLVIALTA. The Extracellular portion of the chain corresponds to 487 to 498; it reads GPIDGAFNKGNT. A helical transmembrane segment spans residues 499–519; that stretch reads PAFGIGGAFAFICGVLALIWL. The Cytoplasmic segment spans residues 520–535; it reads PKTRGVSNAAVVAGGH.

It belongs to the glycoside-pentoside-hexuronide (GPH) cation symporter transporter (TC 2.A.2.4) family. Homodimer. Widely expressed. Highest expression in sink leaves and lowest in germinating seeds.

It is found in the cell membrane. It participates in glycan biosynthesis; sucrose metabolism. Responsible for the transport of sucrose into the cell, with the concomitant uptake of protons (symport system). Can also transport other glucosides such as maltose, arbutin, salicin, helicin, alpha-phenylglucoside and beta-phenylglucoside. The chain is Sucrose transport protein SUT5 (SUT5) from Oryza sativa subsp. japonica (Rice).